Here is a 615-residue protein sequence, read N- to C-terminus: Protein PSK SIMULATOR 2 (615 aa).

Glycine 2 is lipidated: N-myristoyl glycine. Over residues lysine 16–arginine 27 the composition is skewed to basic and acidic residues. Disordered stretches follow at residues lysine 16–lysine 59 and alanine 506–glutamine 529. Residues serine 42 to glycine 52 are compositionally biased toward low complexity. Residues glutamine 512 to glutamine 529 are compositionally biased toward polar residues.

It is found in the nucleus. Promotes seedling growth probably via the regulation of phytosulfokine (PSK) signaling; PSK are peptide phytohormones acting as growth factors. Involved in PSK-induced root growth. Together with PSI1 and PSI3, required during vegetative growth and reproduction. The protein is Protein PSK SIMULATOR 2 of Arabidopsis thaliana (Mouse-ear cress).